The primary structure comprises 580 residues: (3S,6E)-nerolidol synthase 1, chloroplastic (580 aa).

Residues M1–Q31 constitute a chloroplast transit peptide. Mg(2+)-binding residues include D334, D338, D478, S482, and E486. The DDXXD motif motif lies at D334–D338.

It belongs to the terpene synthase family. Tpsg subfamily. Mg(2+) is required as a cofactor. The cofactor is Mn(2+).

It is found in the plastid. The protein localises to the chloroplast. It catalyses the reaction (2E,6E)-farnesyl diphosphate + H2O = (3S,6E)-nerolidol + diphosphate. The protein operates within secondary metabolite biosynthesis; terpenoid biosynthesis. Involved in monoterpene (C10) and sesquiterpene (C15) biosynthesis. Converts geranyl diphosphate (GPP) into S-linalool and farnesyl diphosphate (FPP) into (3S)-E-nerolidol. Probably not expressed in wild strawberry species. The chain is (3S,6E)-nerolidol synthase 1, chloroplastic from Fragaria vesca (Woodland strawberry).